A 662-amino-acid chain; its full sequence is UvrABC system protein B (662 aa).

The 158-residue stretch at 31–188 (DNIEGGEKAQ…NDLVDIQFER (158 aa)) folds into the Helicase ATP-binding domain. 44 to 51 (GATGTGKT) serves as a coordination point for ATP. Positions 97 to 120 (YYDYYQPEAYVPSSDTYIEKDSSV) match the Beta-hairpin motif. In terms of domain architecture, Helicase C-terminal spans 435 to 601 (QIDDLLGEIN…TIKKEIRDLI (167 aa)). The UVR domain occupies 626–661 (KDMIKKLEGQMQEAAGLLDFELAAQIRDMILEIKAM).

Belongs to the UvrB family. In terms of assembly, forms a heterotetramer with UvrA during the search for lesions. Interacts with UvrC in an incision complex.

The protein localises to the cytoplasm. In terms of biological role, the UvrABC repair system catalyzes the recognition and processing of DNA lesions. A damage recognition complex composed of 2 UvrA and 2 UvrB subunits scans DNA for abnormalities. Upon binding of the UvrA(2)B(2) complex to a putative damaged site, the DNA wraps around one UvrB monomer. DNA wrap is dependent on ATP binding by UvrB and probably causes local melting of the DNA helix, facilitating insertion of UvrB beta-hairpin between the DNA strands. Then UvrB probes one DNA strand for the presence of a lesion. If a lesion is found the UvrA subunits dissociate and the UvrB-DNA preincision complex is formed. This complex is subsequently bound by UvrC and the second UvrB is released. If no lesion is found, the DNA wraps around the other UvrB subunit that will check the other stand for damage. The chain is UvrABC system protein B from Streptococcus sanguinis (strain SK36).